A 204-amino-acid chain; its full sequence is Ribosome maturation factor RimP (204 aa).

The protein belongs to the RimP family.

The protein localises to the cytoplasm. Its function is as follows. Required for maturation of 30S ribosomal subunits. This chain is Ribosome maturation factor RimP, found in Albidiferax ferrireducens (strain ATCC BAA-621 / DSM 15236 / T118) (Rhodoferax ferrireducens).